The sequence spans 641 residues: Methylenetetrahydrofolate reductase 2 (641 aa).

Catalysis depends on Glu-20, which acts as the Proton donor/acceptor. Residues 20 to 25 (EYFPPK) and 52 to 53 (TW) each bind NAD(+). FAD-binding positions include 52 to 53 (TW), His-81, 111 to 113 (RGD), Tyr-153, Asp-172, and Lys-179. Asp-113 contributes to the substrate binding site. Residue Gln-190 participates in substrate binding.

It belongs to the methylenetetrahydrofolate reductase family. FAD serves as cofactor.

It catalyses the reaction (6S)-5-methyl-5,6,7,8-tetrahydrofolate + NADP(+) = (6R)-5,10-methylene-5,6,7,8-tetrahydrofolate + NADPH + H(+). Its pathway is one-carbon metabolism; tetrahydrofolate interconversion. Major methylenetetrahydrofolate reductase required to generate the methyl groups necessary for methionine synthetase to convert homocysteine to methionine. Performs 15 to 20 percent of the total methylenetetrahydrofolate reductase activity of the cells. This chain is Methylenetetrahydrofolate reductase 2 (met11), found in Schizosaccharomyces pombe (strain 972 / ATCC 24843) (Fission yeast).